The following is a 371-amino-acid chain: Protein-glutamate methylesterase/protein-glutamine glutaminase 3 (371 aa).

A Response regulatory domain is found at 5–120 (RVVVIDDSAY…SEEILTIRED (116 aa)). Residue aspartate 56 is modified to 4-aspartylphosphate. One can recognise a CheB-type methylesterase domain in the interval 174–362 (PAGRLEVVAI…LDRMSREIIQ (189 aa)). Residues serine 186, histidine 213, and aspartate 309 contribute to the active site.

Belongs to the CheB family. Phosphorylated by CheA. Phosphorylation of the N-terminal regulatory domain activates the methylesterase activity.

The protein localises to the cytoplasm. It carries out the reaction [protein]-L-glutamate 5-O-methyl ester + H2O = L-glutamyl-[protein] + methanol + H(+). The enzyme catalyses L-glutaminyl-[protein] + H2O = L-glutamyl-[protein] + NH4(+). Involved in chemotaxis. Part of a chemotaxis signal transduction system that modulates chemotaxis in response to various stimuli. Catalyzes the demethylation of specific methylglutamate residues introduced into the chemoreceptors (methyl-accepting chemotaxis proteins or MCP) by CheR. Also mediates the irreversible deamidation of specific glutamine residues to glutamic acid. The sequence is that of Protein-glutamate methylesterase/protein-glutamine glutaminase 3 from Geobacter sulfurreducens (strain ATCC 51573 / DSM 12127 / PCA).